Reading from the N-terminus, the 337-residue chain is Endochitinase 37 (337 aa).

A signal peptide spans 1–25 (MTRLLDASFLLLPVIASTLFGTASA). Positions 38–337 (KVLQGYWENW…GSKNWTFGDN (300 aa)) constitute a GH18 domain. Residue Glu160 is the Proton donor of the active site. Residue Asn331 is glycosylated (N-linked (GlcNAc...) asparagine).

The protein belongs to the glycosyl hydrolase 18 family. Chitinase class V subfamily. Monomer.

It localises to the secreted. It catalyses the reaction Random endo-hydrolysis of N-acetyl-beta-D-glucosaminide (1-&gt;4)-beta-linkages in chitin and chitodextrins.. In terms of biological role, secreted chitinase involved in the degradation of chitin, a component of the cell walls of fungi and exoskeletal elements of some animals (including worms and arthropods). Plays a morphogenetic role during apical growth, cell division and differentiation (cell wall morphogenesis). May be involved in the degradation and further assimilation of phytopathogenic fungi, namely mycoparasitism, the major mechanism accounting for the antagonistic activity against phytopathogenic fungi displayed by Trichoderma. In Trichoderma harzianum (Hypocrea lixii), this protein is Endochitinase 37 (chit37).